Reading from the N-terminus, the 214-residue chain is RNA pyrophosphohydrolase (214 aa).

The region spanning 6-149 is the Nudix hydrolase domain; that stretch reads GFRPNVGIIL…KRDVYQLALT (144 aa). A Nudix box motif is present at residues 38–59; it reads GGIKYGETPMQAMYRELHEETG.

Belongs to the Nudix hydrolase family. RppH subfamily. It depends on a divalent metal cation as a cofactor.

In terms of biological role, accelerates the degradation of transcripts by removing pyrophosphate from the 5'-end of triphosphorylated RNA, leading to a more labile monophosphorylated state that can stimulate subsequent ribonuclease cleavage. The chain is RNA pyrophosphohydrolase from Burkholderia orbicola (strain MC0-3).